A 171-amino-acid chain; its full sequence is Tetratricopeptide repeat protein 9C (171 aa).

3 TPR repeats span residues 8–41 (AQLY…LRGL), 72–107 (TDCY…QPDN), and 108–141 (AKAL…KPKD).

It belongs to the TTC9 family.

This Bos taurus (Bovine) protein is Tetratricopeptide repeat protein 9C (TTC9C).